Here is a 544-residue protein sequence, read N- to C-terminus: MKLNDIKRLYKIVRVFLSYGIDEILPHNKYTRSIRCWRMLFFWLKNKHKNKAFGLCLRLALQELGPVWIKLGQMLSTRRDLFPAEIADELALLQDNVEAFSGKIARQQIEQALGSSLENWFTDFDENALASASIAQVHTAKLKLGEEQEKEVVIKVLRPNIQPQIEADLSWMYKLAGLLPKLFREGYRLRAVEVIQEYEKTLRDELDLRVEMANAIKLRENFLDSPMLYIPKMYEAFCHKNVIVMERIYGIPVSDVETLQRNGTDMKLLAERGVQVFFTQVFRDSFFHADMHPGNIFVNPHYPENPQYIGIDCGIVGKLNESDKRYLAESFVAFFNRDYRRVAQMHVDAGWTPQDTNIDDFEQAFREVCEPIFAKPLSEISFAQVLLNLFNVAREFNMQVQPQLVLLQKTLLYIEGLGRQLYPQLDLWDTAKPFLQNWLNEQIGMKVTFKKLKAKLPYLQEHLPDFPETLMDALKQQKFISQQLVEINKKLAKQQRWQKKMFVLIVGIVIFSVTLWQFAALPLAISAGLFLVGFLVWLIGFLLP.

The Protein kinase domain maps to 123-504 (DFDENALASA…QRWQKKMFVL (382 aa)). Residues 129–137 (LASASIAQV) and Lys155 contribute to the ATP site. The active-site Proton acceptor is the Asp290. 2 consecutive transmembrane segments (helical) span residues 501–521 (MFVL…FAAL) and 523–543 (LAIS…GFLL).

Belongs to the ABC1 family. UbiB subfamily.

Its subcellular location is the cell inner membrane. The protein operates within cofactor biosynthesis; ubiquinone biosynthesis [regulation]. Functionally, is probably a protein kinase regulator of UbiI activity which is involved in aerobic coenzyme Q (ubiquinone) biosynthesis. The protein is Probable protein kinase UbiB of Histophilus somni (strain 129Pt) (Haemophilus somnus).